The primary structure comprises 639 residues: Sec1 family domain-containing protein 1 (639 aa).

Phosphoserine occurs at positions 34, 300, and 525.

This sequence belongs to the STXBP/unc-18/SEC1 family. Interacts with STX17. Interacts with STX5A. Interacts with the COG complex via COG4.

It localises to the cytoplasm. Its subcellular location is the endoplasmic reticulum membrane. The protein localises to the golgi apparatus. It is found in the golgi stack membrane. Its function is as follows. Plays a role in SNARE-pin assembly and Golgi-to-ER retrograde transport via its interaction with COG4. Involved in vesicular transport between the endoplasmic reticulum and the Golgi. The chain is Sec1 family domain-containing protein 1 (Scfd1) from Mus musculus (Mouse).